The following is a 194-amino-acid chain: NAD(P)H-quinone oxidoreductase subunit I (194 aa).

2 consecutive 4Fe-4S ferredoxin-type domains span residues 55–84 (GRIH…VDWE) and 95–124 (NHYS…MTEE). [4Fe-4S] cluster is bound by residues Cys64, Cys67, Cys70, Cys74, Cys104, Cys107, Cys110, and Cys114. Positions 173–194 (DLPANAPRPGARPEDLVEKTEA) are disordered. The span at 183–194 (ARPEDLVEKTEA) shows a compositional bias: basic and acidic residues.

This sequence belongs to the complex I 23 kDa subunit family. In terms of assembly, NDH-1 is composed of at least 11 different subunits. [4Fe-4S] cluster serves as cofactor.

Its subcellular location is the cellular thylakoid membrane. The enzyme catalyses a plastoquinone + NADH + (n+1) H(+)(in) = a plastoquinol + NAD(+) + n H(+)(out). The catalysed reaction is a plastoquinone + NADPH + (n+1) H(+)(in) = a plastoquinol + NADP(+) + n H(+)(out). NDH-1 shuttles electrons from an unknown electron donor, via FMN and iron-sulfur (Fe-S) centers, to quinones in the respiratory and/or the photosynthetic chain. The immediate electron acceptor for the enzyme in this species is believed to be plastoquinone. Couples the redox reaction to proton translocation, and thus conserves the redox energy in a proton gradient. The polypeptide is NAD(P)H-quinone oxidoreductase subunit I (Nostoc sp. (strain PCC 7120 / SAG 25.82 / UTEX 2576)).